A 749-amino-acid chain; its full sequence is Polyribonucleotide nucleotidyltransferase (749 aa).

Positions 487 and 493 each coordinate Mg(2+). In terms of domain architecture, KH spans 554–613 (PSTTTIKIDKDKIRDIIGPGGKIIKEICETSGAKIDISDDGTVSVYASDRDKLKVALDKI). One can recognise an S1 motif domain in the interval 623 to 691 (GEIFNGTVVK…NKGKAKLTIK (69 aa)). The tract at residues 691-749 (KNADKDKSSNNTKPKTNVNNTNKDNSEPEQRRDSSKKRAWNEDNNAETAEVITERKYFN) is disordered. Low complexity predominate over residues 699-713 (SNNTKPKTNVNNTNK). Over residues 714-723 (DNSEPEQRRD) the composition is skewed to basic and acidic residues.

Belongs to the polyribonucleotide nucleotidyltransferase family. Mg(2+) is required as a cofactor.

The protein localises to the cytoplasm. The enzyme catalyses RNA(n+1) + phosphate = RNA(n) + a ribonucleoside 5'-diphosphate. Involved in mRNA degradation. Catalyzes the phosphorolysis of single-stranded polyribonucleotides processively in the 3'- to 5'-direction. The chain is Polyribonucleotide nucleotidyltransferase from Rickettsia conorii (strain ATCC VR-613 / Malish 7).